The sequence spans 155 residues: SsrA-binding protein (155 aa).

Belongs to the SmpB family.

The protein resides in the cytoplasm. Functionally, required for rescue of stalled ribosomes mediated by trans-translation. Binds to transfer-messenger RNA (tmRNA), required for stable association of tmRNA with ribosomes. tmRNA and SmpB together mimic tRNA shape, replacing the anticodon stem-loop with SmpB. tmRNA is encoded by the ssrA gene; the 2 termini fold to resemble tRNA(Ala) and it encodes a 'tag peptide', a short internal open reading frame. During trans-translation Ala-aminoacylated tmRNA acts like a tRNA, entering the A-site of stalled ribosomes, displacing the stalled mRNA. The ribosome then switches to translate the ORF on the tmRNA; the nascent peptide is terminated with the 'tag peptide' encoded by the tmRNA and targeted for degradation. The ribosome is freed to recommence translation, which seems to be the essential function of trans-translation. In Streptococcus suis (strain 98HAH33), this protein is SsrA-binding protein.